Consider the following 894-residue polypeptide: Bifunctional enzyme RhaA/RhaB (894 aa).

The interval 1–465 (MGEYRLAVDI…TAFPVTYFLP (465 aa)) is rhamnulokinase. The segment at 466–894 (QRSESHVSSR…KRESEKAKQR (429 aa)) is L-rhamnose isomerase. Mn(2+)-binding residues include His730, Asp762, and Asp764.

It in the N-terminal section; belongs to the rhamnulokinase family. In the C-terminal section; belongs to the rhamnose isomerase family. The cofactor is Mn(2+).

The protein resides in the cytoplasm. It catalyses the reaction L-rhamnulose + ATP = L-rhamnulose 1-phosphate + ADP + H(+). The catalysed reaction is L-rhamnopyranose = L-rhamnulose. The protein operates within carbohydrate degradation; L-rhamnose degradation; glycerone phosphate from L-rhamnose: step 1/3. It functions in the pathway carbohydrate degradation; L-rhamnose degradation; glycerone phosphate from L-rhamnose: step 2/3. The protein is Bifunctional enzyme RhaA/RhaB (rhaAB) of Shouchella clausii (strain KSM-K16) (Alkalihalobacillus clausii).